The sequence spans 340 residues: MADKLVPSSPADASEPLFSFGVIADIQYADLEDGYNYQRSRRRYYRHSLIHLQGAIEDWNKESSMPCCVLQLGDIIDGYNAQYKVSEKSLELVMNTFQMLKVPVHHTWGNHEFYNFSRDYLASSKLNSKFLEDQIAQHPETTPSENYYAYHFVPFPKFRFILLDSYDLSVLGIDPSSPKYEQCMKMLREHNPNVELNSPQGLSEPQYVQFNGGFSQEQLNWLNEVLTFSDTNQEKVVIVSHLPIYPEASDSVCLAWNYVDALSIIWSHKCVVCFLAGHTHDGGYSEDPFGVHHVNLEGVIETAPDSQAFGTVHVFPDKMLLKGRGRVPDRIMNYKREEAL.

M1 is subject to N-acetylmethionine. Zn(2+) contacts are provided by D25, Q27, D74, N110, H241, H278, and H280.

This sequence belongs to the ADPRibase-Mn family. As to quaternary structure, monomer. Requires Mg(2+) as cofactor.

The catalysed reaction is CDP-choline + H2O = phosphocholine + CMP + 2 H(+). It carries out the reaction ADP-D-ribose + H2O = D-ribose 5-phosphate + AMP + 2 H(+). It catalyses the reaction CDP-glycerol + H2O = sn-glycerol 3-phosphate + CMP + 2 H(+). Its function is as follows. Hydrolyzes ADP-ribose, IDP-ribose, CDP-glycerol, CDP-choline and CDP-ethanolamine, but not other non-reducing ADP-sugars or CDP-glucose. May be involved in immune cell signaling as suggested by the second-messenger role of ADP-ribose, which activates TRPM2 as a mediator of oxidative/nitrosative stress. This is Manganese-dependent ADP-ribose/CDP-alcohol diphosphatase (Adprm) from Mus musculus (Mouse).